Reading from the N-terminus, the 430-residue chain is Protein translocase subunit SecY (430 aa).

Helical transmembrane passes span 18 to 38 (IFFT…PAPG), 68 to 88 (FSIF…MQLL), 117 to 137 (FAII…NNYL), 148 to 168 (MSYL…LWLG), 179 to 199 (GISI…LIQF), 215 to 235 (LQVA…VYVL), 270 to 290 (VIPV…TMFF), 308 to 328 (NIGM…YAFV), 368 to 388 (FVGS…TKFM), and 390 to 410 (LPQS…VAIE).

It belongs to the SecY/SEC61-alpha family. As to quaternary structure, component of the Sec protein translocase complex. Heterotrimer consisting of SecY, SecE and SecG subunits. The heterotrimers can form oligomers, although 1 heterotrimer is thought to be able to translocate proteins. Interacts with the ribosome. Interacts with SecDF, and other proteins may be involved. Interacts with SecA.

It localises to the cell membrane. Functionally, the central subunit of the protein translocation channel SecYEG. Consists of two halves formed by TMs 1-5 and 6-10. These two domains form a lateral gate at the front which open onto the bilayer between TMs 2 and 7, and are clamped together by SecE at the back. The channel is closed by both a pore ring composed of hydrophobic SecY resides and a short helix (helix 2A) on the extracellular side of the membrane which forms a plug. The plug probably moves laterally to allow the channel to open. The ring and the pore may move independently. This chain is Protein translocase subunit SecY, found in Staphylococcus carnosus (strain TM300).